Reading from the N-terminus, the 637-residue chain is Phosphomethylpyrimidine synthase (637 aa).

Residues Asn242, Met271, Tyr300, His336, 356 to 358 (SRG), 397 to 400 (DGLR), and Glu436 each bind substrate. His440 contributes to the Zn(2+) binding site. Tyr463 serves as a coordination point for substrate. Zn(2+) is bound at residue His504. [4Fe-4S] cluster is bound by residues Cys584, Cys587, and Cys592.

Belongs to the ThiC family. Homodimer. [4Fe-4S] cluster is required as a cofactor.

The catalysed reaction is 5-amino-1-(5-phospho-beta-D-ribosyl)imidazole + S-adenosyl-L-methionine = 4-amino-2-methyl-5-(phosphooxymethyl)pyrimidine + CO + 5'-deoxyadenosine + formate + L-methionine + 3 H(+). It functions in the pathway cofactor biosynthesis; thiamine diphosphate biosynthesis. Functionally, catalyzes the synthesis of the hydroxymethylpyrimidine phosphate (HMP-P) moiety of thiamine from aminoimidazole ribotide (AIR) in a radical S-adenosyl-L-methionine (SAM)-dependent reaction. This is Phosphomethylpyrimidine synthase from Bordetella avium (strain 197N).